We begin with the raw amino-acid sequence, 252 residues long: uncharacterized protein (252 aa).

The next 6 helical transmembrane spans lie at 5-25, 29-49, 61-81, 141-161, 179-199, and 217-237; these read LTSLITQSLTFSILIVGIVSF, LALVGLLLPGIVFMATLGTFI, IAGIIGCLLGDWCSYFIGLYF, ILPSLLGCILWPPIYFFPGII, WLLLIIAILIWFGIWLTSKWW, and IGWIALIILSSGIIGLILIQF.

The protein belongs to the DedA family.

The protein resides in the cell membrane. This is an uncharacterized protein from Buchnera aphidicola subsp. Schizaphis graminum (strain Sg).